The chain runs to 105 residues: Large ribosomal subunit protein uL24 (105 aa).

It belongs to the universal ribosomal protein uL24 family. In terms of assembly, part of the 50S ribosomal subunit.

One of two assembly initiator proteins, it binds directly to the 5'-end of the 23S rRNA, where it nucleates assembly of the 50S subunit. In terms of biological role, one of the proteins that surrounds the polypeptide exit tunnel on the outside of the subunit. The protein is Large ribosomal subunit protein uL24 of Dictyoglomus turgidum (strain DSM 6724 / Z-1310).